The chain runs to 128 residues: Large ribosomal subunit protein bL17 (128 aa).

This sequence belongs to the bacterial ribosomal protein bL17 family. In terms of assembly, part of the 50S ribosomal subunit. Contacts protein L32.

This Enterobacter sp. (strain 638) protein is Large ribosomal subunit protein bL17.